Reading from the N-terminus, the 1232-residue chain is Anoctamin-8 (1232 aa).

Positions 1–32 (MAEAASGAGGTSLEGERGKRPPPEGEPAAPAS) are disordered. Position 2 is an N-acetylalanine (A2). Residues 2–244 (AEAASGAGGT…DDICDYFGVK (243 aa)) lie on the Extracellular side of the membrane. Basic and acidic residues predominate over residues 14 to 23 (EGERGKRPPP). A helical membrane pass occupies residues 245–265 (IAMYFAWLGFYTSAMVYPAVF). Topologically, residues 266-281 (GSVLYTFTEADQTSRD) are cytoplasmic. A helical membrane pass occupies residues 282-302 (VSCVVFALFNVIWSTLFLEEW). Over 303–356 (KRRGAELAYKWGTLDSPGEAVEEPRPQFRGVRRISPITRAEEFYYPPWKRLLFQ) the chain is Extracellular. Phosphoserine is present on S318. The chain crosses the membrane as a helical span at residues 357-377 (LLVSLPLCLACLVCVFLLMLG). The Cytoplasmic segment spans residues 378–400 (CFQLQELVLSVKGLPRLARFLPK). A helical transmembrane segment spans residues 401–421 (VMLALLVSVSAEGYKKLAIWL). Residues 422–437 (NDMENYRLESAYEKHL) lie on the Extracellular side of the membrane. The chain crosses the membrane as a helical span at residues 438-458 (IIKVVLFQFVNSYLSLFYIGF). Residues 459 to 750 (YLKDMERLKE…YEDTFQDYQE (292 aa)) are Cytoplasmic-facing. A disordered region spans residues 524-650 (RRLEPQADEG…SPTMVEKGLE (127 aa)). Over residues 532–551 (EGGGGGSGGGGRRCLSGGCG) the composition is skewed to gly residues. Over residues 582-606 (EEDEDDEEEEDEEEEEDEEEGEEGG) the composition is skewed to acidic residues. At S669 the chain carries Phosphoserine. Positions 681–728 (RAGGEGRDQGPDGGPDPEPGSNSDSTRRQRRQNRSSWIDPPEEEHSPQ) are disordered. A helical membrane pass occupies residues 751-771 (MFVQFGYVVLFSSAFPLAALC). Topologically, residues 772 to 807 (ALVNNLIEIRSDAFKLCTGLQRPFGQRVESIGQWQK) are extracellular. A Phosphoserine; by FAM20C modification is found at S801. Residues 808-828 (VMEAMGVLAIVVNCYLIGQCG) traverse the membrane as a helical segment. The Cytoplasmic portion of the chain corresponds to 829–841 (QLQRLFPWLSPEA). A helical transmembrane segment spans residues 842–862 (AIVSVVVLEHFALLLKYLIHV). Residues 863-1232 (AIPDIPGWVA…QAVCWPSGWH (370 aa)) lie on the Extracellular side of the membrane. Disordered regions lie at residues 888–970 (RHER…GSLL), 997–1152 (LAAA…WQWD), and 1174–1232 (PPCA…SGWH). Positions 904 to 932 (RREEEERQRHAEHHARREHDSGGREEARA) are enriched in basic and acidic residues. Low complexity-rich tracts occupy residues 933–953 (EGSGLDPATSSEKASAKAKGS) and 997–1006 (LAAAGAGATT). Asymmetric dimethylarginine; alternate is present on R1020. R1020 carries the post-translational modification Omega-N-methylarginine; alternate. Over residues 1031 to 1043 (KSPETRRDSERSH) the composition is skewed to basic and acidic residues. Residues 1078 to 1087 (TPSSGSSRVQ) are compositionally biased toward polar residues. Composition is skewed to pro residues over residues 1130 to 1145 (PAPPPPMPLPRPPTPP) and 1197 to 1221 (LPPPPLPPTSDPLETPAPSPSPSPS).

The protein belongs to the anoctamin family. Expressed in embryonic stem cells, fetal brain and neural tissues.

It localises to the cell membrane. Its function is as follows. Does not exhibit calcium-activated chloride channel (CaCC) activity. The chain is Anoctamin-8 (ANO8) from Homo sapiens (Human).